A 377-amino-acid chain; its full sequence is Chaperone protein DnaJ (377 aa).

Residues 3 to 67 form the J domain; sequence DYYDLLGVGR…QTRARYDQFG (65 aa). A CR-type zinc finger spans residues 133 to 215; that stretch reads GQEQEIKIPH…CGGQGVRQVR (83 aa). Residues C146, C149, C163, C166, C189, C192, C203, and C206 each coordinate Zn(2+). 4 CXXCXGXG motif repeats span residues 146-153, 163-170, 189-196, and 203-210; these read CDTCGGSG, CGTCGGAG, CPNCGGTG, and CNACGGQG.

It belongs to the DnaJ family. As to quaternary structure, homodimer. Zn(2+) serves as cofactor.

The protein resides in the cytoplasm. Participates actively in the response to hyperosmotic and heat shock by preventing the aggregation of stress-denatured proteins and by disaggregating proteins, also in an autonomous, DnaK-independent fashion. Unfolded proteins bind initially to DnaJ; upon interaction with the DnaJ-bound protein, DnaK hydrolyzes its bound ATP, resulting in the formation of a stable complex. GrpE releases ADP from DnaK; ATP binding to DnaK triggers the release of the substrate protein, thus completing the reaction cycle. Several rounds of ATP-dependent interactions between DnaJ, DnaK and GrpE are required for fully efficient folding. Also involved, together with DnaK and GrpE, in the DNA replication of plasmids through activation of initiation proteins. This chain is Chaperone protein DnaJ, found in Parasynechococcus marenigrum (strain WH8102).